A 518-amino-acid polypeptide reads, in one-letter code: U3 small nucleolar RNA-associated protein 15 homolog (518 aa).

The residue at position 2 (Ala2) is an N-acetylalanine. WD repeat units follow at residues 36-75 (KEFGAVSKVDFSPQPPYNYAVTASSRIHIYGRYSQEPIKT), 78-117 (RFKDTAYCATFRQDGRLLVAGSEDGGVQLFDISGRAPLRQ), 120-159 (GHTKAVHTVDFTADKYHVVSGADDYTVKLWDIPNSKEILT), 162-202 (EHSD…SVLS), 204-242 (EHGQPVESVLLFPSGGLLVSAGGRYVKVWDMLKGGQLLV), 246-285 (NHHKTVTCLCLSSSGQRLLSGSLDRKVKVYSTTSYKVVHS), and 287-326 (DYAASILSLALAHEDETIVVGMTNGILSVKHRKSEAKKES). Residue Lys249 forms a Glycyl lysine isopeptide (Lys-Gly) (interchain with G-Cter in SUMO2) linkage.

In terms of assembly, part of the small subunit (SSU) processome, composed of more than 70 proteins and the RNA chaperone small nucleolar RNA (snoRNA) U3. May be a component of the proposed t-UTP subcomplex of the ribosomal small subunit (SSU) processome containing at least UTP4, WDR43, HEATR1, UTP15, WDR75. Interacts directly with UTP4 and WDR43.

It localises to the nucleus. It is found in the nucleolus. In terms of biological role, ribosome biogenesis factor. Involved in nucleolar processing of pre-18S ribosomal RNA. Required for optimal pre-ribosomal RNA transcription by RNA polymerase I. Part of the small subunit (SSU) processome, first precursor of the small eukaryotic ribosomal subunit. During the assembly of the SSU processome in the nucleolus, many ribosome biogenesis factors, an RNA chaperone and ribosomal proteins associate with the nascent pre-rRNA and work in concert to generate RNA folding, modifications, rearrangements and cleavage as well as targeted degradation of pre-ribosomal RNA by the RNA exosome. The chain is U3 small nucleolar RNA-associated protein 15 homolog from Homo sapiens (Human).